The primary structure comprises 429 residues: Enolase (429 aa).

Position 163 (Q163) interacts with (2R)-2-phosphoglycerate. E205 acts as the Proton donor in catalysis. Positions 242, 285, and 312 each coordinate Mg(2+). (2R)-2-phosphoglycerate is bound by residues K337, R366, S367, and K388. K337 (proton acceptor) is an active-site residue.

Belongs to the enolase family. It depends on Mg(2+) as a cofactor.

Its subcellular location is the cytoplasm. It localises to the secreted. The protein localises to the cell surface. It carries out the reaction (2R)-2-phosphoglycerate = phosphoenolpyruvate + H2O. It participates in carbohydrate degradation; glycolysis; pyruvate from D-glyceraldehyde 3-phosphate: step 4/5. In terms of biological role, catalyzes the reversible conversion of 2-phosphoglycerate (2-PG) into phosphoenolpyruvate (PEP). It is essential for the degradation of carbohydrates via glycolysis. The sequence is that of Enolase from Azoarcus sp. (strain BH72).